Consider the following 387-residue polypeptide: GTPase Obg (387 aa).

Positions 1–159 constitute an Obg domain; it reads MKFVDEVEIR…RSLKLELLLL (159 aa). Positions 160–333 constitute an OBG-type G domain; that stretch reads ADVGLLGLPN…LTQKVMTFIE (174 aa). GTP is bound by residues 166 to 173, 191 to 195, 213 to 216, 283 to 286, and 314 to 316; these read GLPNAGKS, FTTLV, DIPG, NKLD, and SAF. Mg(2+) is bound by residues Ser173 and Thr193. The interval 361–387 is disordered; the sequence is AAHSQDDDLDDDDWDEDDYDVEVEYRQ. A compositionally biased stretch (acidic residues) spans 367 to 387; the sequence is DDLDDDDWDEDDYDVEVEYRQ.

It belongs to the TRAFAC class OBG-HflX-like GTPase superfamily. OBG GTPase family. As to quaternary structure, monomer. Mg(2+) is required as a cofactor.

It is found in the cytoplasm. Its function is as follows. An essential GTPase which binds GTP, GDP and possibly (p)ppGpp with moderate affinity, with high nucleotide exchange rates and a fairly low GTP hydrolysis rate. Plays a role in control of the cell cycle, stress response, ribosome biogenesis and in those bacteria that undergo differentiation, in morphogenesis control. The polypeptide is GTPase Obg (Colwellia psychrerythraea (strain 34H / ATCC BAA-681) (Vibrio psychroerythus)).